The sequence spans 1409 residues: DNA-directed RNA polymerase subunit beta' (1409 aa).

Positions 70, 72, 85, and 88 each coordinate Zn(2+). Mg(2+) is bound by residues D458, D460, and D462. Zn(2+) contacts are provided by C813, C887, C894, and C897.

This sequence belongs to the RNA polymerase beta' chain family. The RNAP catalytic core consists of 2 alpha, 1 beta, 1 beta' and 1 omega subunit. When a sigma factor is associated with the core the holoenzyme is formed, which can initiate transcription. It depends on Mg(2+) as a cofactor. Requires Zn(2+) as cofactor.

The catalysed reaction is RNA(n) + a ribonucleoside 5'-triphosphate = RNA(n+1) + diphosphate. Functionally, DNA-dependent RNA polymerase catalyzes the transcription of DNA into RNA using the four ribonucleoside triphosphates as substrates. The chain is DNA-directed RNA polymerase subunit beta' from Acidovorax ebreus (strain TPSY) (Diaphorobacter sp. (strain TPSY)).